Reading from the N-terminus, the 215-residue chain is KID-containing protein 1 (215 aa).

2 disordered regions span residues 1–132 (MAGG…NKKR) and 150–183 (NPKS…GDVL). Residues 64–81 (DSEEEDEESEEDNDEEEL) are compositionally biased toward acidic residues. A Nuclear localization signal motif is present at residues 129-137 (NKKRRLQIY). Acidic residues predominate over residues 162–175 (DNDDEEGDDGDLSD). A kinase-inducible domain (KID) region spans residues 177-204 (ERGGDVLARRPSFKNRALKSMSCFALSD). Serine 188 bears the Phosphoserine; by PKA mark.

As to quaternary structure, interacts with HDA19; Ser-188 is critical for this interaction. In terms of tissue distribution, strongly expressed in stems, flowers, roots and immature siliques, but not detected in leaf blades of seedlings.

The protein resides in the nucleus. Transcription activator which may regulates gene expression through interaction with the histone deacetylase HDA19. In Brassica napus (Rape), this protein is KID-containing protein 1.